A 1530-amino-acid chain; its full sequence is Neurexin-1 (1530 aa).

An N-terminal signal peptide occupies residues 1-30 (MGTALLQRGGCFLLCLSLLLLGCWAELGSG). In terms of domain architecture, Laminin G-like 1 spans 31–212 (LEFPGAEGQW…KLDDEPPNSG (182 aa)). At 31–1454 (LEFPGAEGQW…EVIRESSSTT (1424 aa)) the chain is on the extracellular side. N-linked (GlcNAc...) asparagine glycosylation is found at Asn-125 and Asn-190. The tract at residues 199–221 (SGEVKLDDEPPNSGGGSPCEAGE) is disordered. The 44-residue stretch at 213-256 (GGSPCEAGEEGEGGVCLNGGVCSVVDDQAVCDCSRTGFRGKDCS) folds into the EGF-like 1 domain. Cystine bridges form between Cys-228–Cys-243 and Cys-245–Cys-255. Laminin G-like domains follow at residues 299–496 (IATF…AFKC) and 503–695 (DPIT…KPSC). 3 residues coordinate Ca(2+): Asp-345, Leu-362, and Met-430. Cystine bridges form between Cys-460-Cys-496, Cys-666-Cys-695, Cys-703-Cys-714, Cys-708-Cys-723, and Cys-725-Cys-735. The EGF-like 2 domain maps to 699–736 (TAKPCLSNPCKNNGMCRDGWNRYVCDCSGTGYLGRSCE). The O-linked (Glc...) serine glycan is linked to Ser-705. Laminin G-like domains are found at residues 741-914 (VLSY…IDYC) and 928-1103 (DPVT…ERGC). Residues Asp-788 and Leu-805 each contribute to the Ca(2+) site. The N-linked (GlcNAc...) asparagine glycan is linked to Asn-813. Residue Arg-864 participates in Ca(2+) binding. Cystine bridges form between Cys-906-Cys-914, Cys-1075-Cys-1103, Cys-1110-Cys-1121, Cys-1115-Cys-1130, and Cys-1132-Cys-1142. Positions 1106–1143 (PSTTCQEDSCSNQGVCLQQWDGISCDCSMTSFSGPLCN) constitute an EGF-like 3 domain. Residues 1149–1347 (YIFSKGGGQI…DANIAIVGNV (199 aa)) form the Laminin G-like 6 domain. The Ca(2+) site is built by Asp-1199 and Val-1216. Asn-1246 is a glycosylation site (N-linked (GlcNAc...) asparagine). Ca(2+)-binding residues include Ile-1298 and Asn-1300. O-linked (Xyl...) (heparan sulfate) serine glycosylation occurs at Ser-1408. Residues 1411–1443 (CPSDDEDIDPCEPSSGGLANPTRAGGREPYPGS) form a disordered region. The chain crosses the membrane as a helical span at residues 1455 to 1475 (GMVVGIVAAAALCILILLYAM). Over 1476-1530 (YKYRNRDEGSYHVDESRNYISNSAQSNGAVVKEKQPSSAKSANKNKKNKDKEYYV) the chain is Cytoplasmic. Residues 1497–1523 (NSAQSNGAVVKEKQPSSAKSANKNKKN) form an interaction with CASK region. The disordered stretch occupies residues 1497 to 1530 (NSAQSNGAVVKEKQPSSAKSANKNKKNKDKEYYV).

It belongs to the neurexin family. Interacts (via laminin G-like domain 2 and/or laminin G-like domain 6) with NLGN1 forming a heterotetramer, where one NLGN1 dimer interacts with one NRXN1 dimer. Also interacts (via laminin G-like domain 2 and/or laminin G-like domain 6) with NLGN2, NLGN3 and NLGN4L; interactions with NLGN1, NLGN2, NLGN3 and NLGN4L are calcium-dependent. Interacts (via cytoplasmic C-terminal region) with CASK (via the PDZ, SH3 and guanylate kinase-like domains). Interacts (via cytoplasmic C-terminus) with CASKIN1 and APBA1. Interacts (via laminin G-like domain 2) with NXPH1 and NXPH3. Alpha-type isoforms (neurexin-1-alpha) interact (via laminin G-like domain 2 and/or laminin G-like domain 6) with DAG1 (via alpha-dystroglycan chain). Interacts with LRRTM1, LRRTM2, LRRTM3 and LRRTM4. Interacts with SYT13 and SYTL1. Interacts with CBLN1, CBLN2 and, less avidly, with CBLN4. Interacts with CLSTN3. Alpha-type isoforms interact with alpha-latrotoxin from spider venom. In terms of processing, O-glycosylated; contains heparan sulfate. Heparan sulfate attachment is required for synapse development by mediating interactions with neuroligins and LRRTM2.

The protein localises to the presynaptic cell membrane. Its function is as follows. Cell surface protein involved in cell-cell-interactions, exocytosis of secretory granules and regulation of signal transmission. Function is isoform-specific. Alpha-type isoforms have a long N-terminus with six laminin G-like domains and play an important role in synaptic signal transmission. Alpha-type isoforms play a role in the regulation of calcium channel activity and Ca(2+)-triggered neurotransmitter release at synapses and at neuromuscular junctions. They play an important role in Ca(2+)-triggered exocytosis of secretory granules in pituitary gland. They may affect their functions at synapses and in endocrine cells via their interactions with proteins from the exocytotic machinery. Likewise, alpha-type isoforms play a role in regulating the activity of postsynaptic NMDA receptors, a subtype of glutamate-gated ion channels. Both alpha-type and beta-type isoforms may play a role in the formation or maintenance of synaptic junctions via their interactions (via the extracellular domains) with neuroligin family members, CBLN1 or CBLN2. In vitro, triggers the de novo formation of presynaptic structures. May be involved in specification of excitatory synapses. Alpha-type isoforms were first identified as receptors for alpha-latrotoxin from spider venom. This Bos taurus (Bovine) protein is Neurexin-1 (NRXN1).